A 234-amino-acid chain; its full sequence is Ponticulin-like protein J (234 aa).

The first 20 residues, 1–20 (MRLLNNLILMVVLFVAVSNA), serve as a signal peptide directing secretion. N-linked (GlcNAc...) asparagine glycosylation is found at Asn19, Asn143, Asn166, and Asn206. The disordered stretch occupies residues 115–213 (TIKCGTLPPD…SDNETAEGNN (99 aa)). Residues 154–195 (KSTPKSPSTPKTNNSNEDSDLTTSSSDSSSSTKSSPKSKSST) show a composition bias toward low complexity. Residue Asn212 is the site of GPI-like-anchor amidated asparagine attachment. An N-linked (GlcNAc...) asparagine glycan is attached at Asn213. A propeptide spans 213 to 234 (NASSNIATFSLVIISLLVASLF) (removed in mature form).

It belongs to the ponticulin family. Post-translationally, the GPI-like-anchor contains a phosphoceramide group, rather than a phosphatidyl group.

It localises to the cell membrane. Binds F-actin and nucleates actin assembly. The chain is Ponticulin-like protein J (ponJ) from Dictyostelium discoideum (Social amoeba).